We begin with the raw amino-acid sequence, 284 residues long: RNase adapter protein RapZ (284 aa).

8–15 is a binding site for ATP; sequence GRSGSGKS. 56 to 59 lines the GTP pocket; it reads DVRN. An RNA-binding region spans residues 266 to 284; sequence RARGKNVQSRHRTLEKRKQ.

This sequence belongs to the RapZ-like family. RapZ subfamily. In terms of assembly, homotrimer.

In terms of biological role, modulates the synthesis of GlmS, by affecting the processing and stability of the regulatory small RNA GlmZ. When glucosamine-6-phosphate (GlcN6P) concentrations are high in the cell, RapZ binds GlmZ and targets it to cleavage by RNase E. Consequently, GlmZ is inactivated and unable to activate GlmS synthesis. Under low GlcN6P concentrations, RapZ is sequestered and inactivated by an other regulatory small RNA, GlmY, preventing GlmZ degradation and leading to synthesis of GlmS. The protein is RNase adapter protein RapZ of Yersinia pseudotuberculosis serotype O:1b (strain IP 31758).